Reading from the N-terminus, the 429-residue chain is MMLFSLFLISILHILLVKCQLDTNYEVSDETVSDNNKWAVLVAGSNGYPNYRHQADVCHAYHVLRSKGIKPEHIITMMYDDIAYNLMNPFPGKLFNDYNHKDWYEGVVIDYRGKNVNSKTFLKVLKGDKSAGGKVLKSGKNDDVFIYFTDHGAPGLIAFPDDELYAKEFMSTLKYLHSHKRYSKLVIYIEANESGSMFQQILPSNLSIYATTAANSTECSYSTFCGDPTITTCLADLYSYNWIVDSQTHHLTQRTLDQQYKEVKRETDLSHVQRYGDTRMGKLYVSEFQGSRDKSSSENDEPPMKPRHSIASRDIPLHTLHRQIMMTNNAEDKSFLMQILGLKLKRRDLIEDTMKLIVKVMNNEEIPNTKATIDQTLDCTESVYEQFKSKCFTLQQAPEVGGHFSTLYNYCADGYTAETINEAIIKICG.

The N-terminal stretch at 1–19 (MMLFSLFLISILHILLVKC) is a signal peptide. The propeptide occupies 20-31 (QLDTNYEVSDET). The active site involves His151. The tract at residues 288–309 (FQGSRDKSSSENDEPPMKPRHS) is disordered. A propeptide spanning residues 292-429 (RDKSSSENDE…INEAIIKICG (138 aa)) is cleaved from the precursor.

The protein belongs to the peptidase C13 family.

The enzyme catalyses Hydrolysis of proteins and small molecule substrates at -Asn-|-Xaa- bonds.. In terms of biological role, this protease is used by the parasite for degradation of the host globin. The polypeptide is Hemoglobinase (Schistosoma mansoni (Blood fluke)).